The chain runs to 235 residues: Small ribosomal subunit protein eS4 (235 aa).

Positions 43–114 (IPLLLIVRDM…DPHRFLRLIE (72 aa)) constitute an S4 RNA-binding domain.

The protein belongs to the eukaryotic ribosomal protein eS4 family.

The chain is Small ribosomal subunit protein eS4 from Korarchaeum cryptofilum (strain OPF8).